We begin with the raw amino-acid sequence, 305 residues long: Ribosomal RNA small subunit methyltransferase H (305 aa).

Residues 37-39 (GGH), D57, F85, D101, and H108 contribute to the S-adenosyl-L-methionine site.

The protein belongs to the methyltransferase superfamily. RsmH family.

The protein resides in the cytoplasm. The enzyme catalyses cytidine(1402) in 16S rRNA + S-adenosyl-L-methionine = N(4)-methylcytidine(1402) in 16S rRNA + S-adenosyl-L-homocysteine + H(+). Functionally, specifically methylates the N4 position of cytidine in position 1402 (C1402) of 16S rRNA. In Parabacteroides distasonis (strain ATCC 8503 / DSM 20701 / CIP 104284 / JCM 5825 / NCTC 11152), this protein is Ribosomal RNA small subunit methyltransferase H.